The following is a 420-amino-acid chain: Serine--tRNA ligase (420 aa).

Position 229–231 (229–231) interacts with L-serine; that stretch reads TAE. 260 to 262 contacts ATP; it reads RSE. E283 is an L-serine binding site. 347-350 serves as a coordination point for ATP; that stretch reads EISS. S381 contacts L-serine.

Belongs to the class-II aminoacyl-tRNA synthetase family. Type-1 seryl-tRNA synthetase subfamily. In terms of assembly, homodimer. The tRNA molecule binds across the dimer.

It localises to the cytoplasm. It catalyses the reaction tRNA(Ser) + L-serine + ATP = L-seryl-tRNA(Ser) + AMP + diphosphate + H(+). The enzyme catalyses tRNA(Sec) + L-serine + ATP = L-seryl-tRNA(Sec) + AMP + diphosphate + H(+). Its pathway is aminoacyl-tRNA biosynthesis; selenocysteinyl-tRNA(Sec) biosynthesis; L-seryl-tRNA(Sec) from L-serine and tRNA(Sec): step 1/1. Catalyzes the attachment of serine to tRNA(Ser). Is also able to aminoacylate tRNA(Sec) with serine, to form the misacylated tRNA L-seryl-tRNA(Sec), which will be further converted into selenocysteinyl-tRNA(Sec). In Gluconobacter oxydans (strain 621H) (Gluconobacter suboxydans), this protein is Serine--tRNA ligase.